The chain runs to 1047 residues: [F-actin]-monooxygenase MICAL1 (1047 aa).

The tract at residues 1-489 is monooxygenase domain; it reads MASPTSTNPA…QDLYDIMDKE (489 aa). FAD contacts are provided by residues C95, 114–116, 121–123, F181, Y293, and D393; these read EKR and RHN. T475 carries the phosphothreonine modification. In terms of domain architecture, Calponin-homology (CH) spans 507–611; it reads SAGTEELLHW…YLSHFHSAFK (105 aa). S616 carries the phosphoserine modification. Residues 644 to 672 form a disordered region; sequence RTKVEEETPCTEEPPVSEPSVPPALPSEH. A compositionally biased stretch (pro residues) spans 659–668; it reads VSEPSVPPAL. Positions 679–741 constitute an LIM zinc-binding domain; that stretch reads DVCELCGKRL…LQHLPQEDQK (63 aa). Residues C681, C684, H702, C705, C708, C711, C731, and H734 each contribute to the Zn(2+) site. 2 disordered regions span residues 739–787 and 849–872; these read DQKE…QPAR and EKGE…PPPL. A compositionally biased stretch (polar residues) spans 745–767; sequence NNGSPENQELPTPGDSTTQSGPS. Residues S777 and S781 each carry the phosphoserine modification. Acidic residues predominate over residues 851 to 868; it reads GEEEEEEEEEEEEEEEEL. The bMERB domain maps to 905-1047; sequence KEEEMKRFCK…EERRLREMPV (143 aa). Positions 912 to 996 form a coiled coil; that stretch reads FCKAQAIQRR…LEEKQRQLDH (85 aa).

It belongs to the Mical family. In terms of assembly, interacts with STK38 and STK38L. Associates with the SH3 domain of NEDD9. Interacts with VIM and PLXNA3. Interacts with RAB1B, RAB8A, RAB10, RAB13 and RAB15 (in their GTP-bound forms); binding to RAB1B is of low affinity compared to other Rab proteins; at least in case of RAB8A and RAB10 can bind 2 molecules of the Rab proteins simultaneously. Interacts with GRAF1/ARHGAP26, GRAF2/ARHGAP10, RAB8A, RAB8B and RAB10; may bind simultaneously to GRAFs and Rabs and connects GRAFs to Rabs. Does not interact with RAB1 and RAB11A. Requires FAD as cofactor.

The protein localises to the cytoplasm. Its subcellular location is the cytoskeleton. It localises to the endosome membrane. It is found in the midbody. It carries out the reaction L-methionyl-[F-actin] + NADPH + O2 + H(+) = L-methionyl-(R)-S-oxide-[F-actin] + NADP(+) + H2O. The catalysed reaction is NADPH + O2 + H(+) = H2O2 + NADP(+). Its function is as follows. Monooxygenase that promotes depolymerization of F-actin by mediating oxidation of specific methionine residues on actin to form methionine-sulfoxide, resulting in actin filament disassembly and preventing repolymerization. In the absence of actin, it also functions as a NADPH oxidase producing H(2)O(2). Acts as a cytoskeletal regulator that connects NEDD9 to intermediate filaments. Also acts as a negative regulator of apoptosis via its interaction with STK38 and STK38L; acts by antagonizing STK38 and STK38L activation by MST1/STK4. Involved in regulation of lamina-specific connectivity in the nervous system such as the development of lamina-restricted hippocampal connections. Through redox regulation of the actin cytoskeleton controls the intracellular distribution of secretory vesicles containing L1/neurofascin/NgCAM family proteins in neurons, thereby regulating their cell surface levels. May act as Rab effector protein and play a role in vesicle trafficking. Promotes endosomal tubule extension by associating with RAB8 (RAB8A or RAB8B), RAB10 and GRAF (GRAF1/ARHGAP26 or GRAF2/ARHGAP10) on the endosomal membrane which may connect GRAFs to Rabs, thereby participating in neosynthesized Rab8-Rab10-Rab11-dependent protein export. The protein is [F-actin]-monooxygenase MICAL1 (Mical1) of Rattus norvegicus (Rat).